A 305-amino-acid polypeptide reads, in one-letter code: Insulin-like growth factor-binding protein 2 (305 aa).

A signal peptide spans 1–34; the sequence is MLPRLGGPALPLLLPSLLLLLLLGAGGCGPGVRA. The 83-residue stretch at 36-118 folds into the IGFBP N-terminal domain; that stretch reads VLFRCPPCTP…VTGAGTCEKR (83 aa). 9 disulfide bridges follow: cysteine 40-cysteine 68, cysteine 43-cysteine 70, cysteine 51-cysteine 71, cysteine 59-cysteine 74, cysteine 82-cysteine 95, cysteine 89-cysteine 115, cysteine 207-cysteine 241, cysteine 252-cysteine 263, and cysteine 265-cysteine 286. A Thyroglobulin type-1 domain is found at 204-286; it reads RTPCQQELDQ…APTIRGDPEC (83 aa). Positions 281–283 match the Cell attachment site motif; the sequence is RGD.

As to quaternary structure, interacts with IGF1. Interacts with IGF2. Interacts (via RGD motif) with integrin alpha5/ITGA5; this interaction induces cell migration, adhesion or apoptosis according to the context. Interacts with PTPRB; this interaction leads to PTPRB dimerization and inactivation. Post-translationally, cleaved by MMP9 leading to release of free IGF2 from IGFBP2-IGF2 complex, which contributes to enhance the motility and the growth of astrocytes. O-glycosylated. In terms of tissue distribution, highly expressed in adult liver, but also in kidney, lung, brain, spleen, testis and ovary.

The protein resides in the secreted. In terms of biological role, multifunctional protein that plays a critical role in regulating the availability of IGFs such as IGF1 and IGF2 to their receptors and thereby regulates IGF-mediated cellular processes including proliferation, differentiation, and apoptosis in a cell-type specific manner. Functions coordinately with receptor protein tyrosine phosphatase beta/PTPRB and the IGF1 receptor to regulate IGF1-mediated signaling by stimulating the phosphorylation of PTEN leading to its inactivation and AKT1 activation. Plays a positive role in cell migration via interaction with integrin alpha5/ITGA5 through an RGD motif. Additionally, interaction with ITGA5/ITGB1 enhances the adhesion of endothelial progenitor cells to endothelial cells. Upon mitochondrial damage, facilitates apoptosis with ITGA5 of podocytes, and then activates the phosphorylation of focal adhesion kinase (FAK)-mediated mitochondrial injury. The chain is Insulin-like growth factor-binding protein 2 (Igfbp2) from Mus musculus (Mouse).